The primary structure comprises 560 residues: Diphtheria toxin homolog CRM228 (560 aa).

An N-terminal signal peptide occupies residues 1–25; it reads MSRKLFASILIGALLGIGAPPSAHA. Residues His46 and Tyr90 each coordinate NAD(+). The active site involves Glu173. Cystine bridges form between Cys211/Cys226 and Cys486/Cys496.

This Corynebacterium diphtheriae protein is Diphtheria toxin homolog CRM228.